We begin with the raw amino-acid sequence, 180 residues long: NAD(P)H-quinone oxidoreductase subunit I, chloroplastic (180 aa).

2 consecutive 4Fe-4S ferredoxin-type domains span residues 55–84 (GRIH…VDWR) and 95–124 (LNYS…MTEE). The [4Fe-4S] cluster site is built by C64, C67, C70, C74, C104, C107, C110, and C114.

It belongs to the complex I 23 kDa subunit family. NDH is composed of at least 16 different subunits, 5 of which are encoded in the nucleus. [4Fe-4S] cluster is required as a cofactor.

Its subcellular location is the plastid. It localises to the chloroplast thylakoid membrane. The enzyme catalyses a plastoquinone + NADH + (n+1) H(+)(in) = a plastoquinol + NAD(+) + n H(+)(out). The catalysed reaction is a plastoquinone + NADPH + (n+1) H(+)(in) = a plastoquinol + NADP(+) + n H(+)(out). In terms of biological role, NDH shuttles electrons from NAD(P)H:plastoquinone, via FMN and iron-sulfur (Fe-S) centers, to quinones in the photosynthetic chain and possibly in a chloroplast respiratory chain. The immediate electron acceptor for the enzyme in this species is believed to be plastoquinone. Couples the redox reaction to proton translocation, and thus conserves the redox energy in a proton gradient. The protein is NAD(P)H-quinone oxidoreductase subunit I, chloroplastic of Amborella trichopoda.